We begin with the raw amino-acid sequence, 497 residues long: MTESTDPSTRAGEAGALWGGRFAGGPSPELVALSRSTHFDWQLAPYDIAGSRAHARALASAGYLSDAERQAMLQALDTLEDRVRSGALVASEADEDVHGALERGLMDIAGTELGGKLRAGRSRNDQIATLVRMYLRDHAAVIHAMLVQLVDALAAQAEAAGGAIMPGRTHLQHAQPVLLAHHLLAHCWPLVRDLERLADWDARADVSPYGSGALAGSTLGLDAGAVARDLGFARSSENSIDGTAARDVVAEFAFVLAQVGIDLSRLSEEIILWNTREFGFVTLSDSFSTGSSIMPQKKNPDIAELARGKSGRLIGNLSGLLATLKGLPLAYNRDLQEDKEPVFDSVQTLEVLLPAFTGMIATLRFDTDRMAELAPQGFSLATDVAEWLVKHRVAFRDAHEVTGELVKAAESRGVGLEDLTDDDLRAVSPHLVPEVREVLSIEGSVASRDGAGGTARVRVDEQRAELVRRVAELRARADAAAERRAAAAASASGEASE.

This sequence belongs to the lyase 1 family. Argininosuccinate lyase subfamily.

It is found in the cytoplasm. It catalyses the reaction 2-(N(omega)-L-arginino)succinate = fumarate + L-arginine. It functions in the pathway amino-acid biosynthesis; L-arginine biosynthesis; L-arginine from L-ornithine and carbamoyl phosphate: step 3/3. The sequence is that of Argininosuccinate lyase from Clavibacter michiganensis subsp. michiganensis (strain NCPPB 382).